We begin with the raw amino-acid sequence, 209 residues long: Ribosomal RNA large subunit methyltransferase E (209 aa).

Residues Gly63, Trp65, Asp83, Asp99, and Asp124 each contribute to the S-adenosyl-L-methionine site. The Proton acceptor role is filled by Lys164.

It belongs to the class I-like SAM-binding methyltransferase superfamily. RNA methyltransferase RlmE family.

It is found in the cytoplasm. It carries out the reaction uridine(2552) in 23S rRNA + S-adenosyl-L-methionine = 2'-O-methyluridine(2552) in 23S rRNA + S-adenosyl-L-homocysteine + H(+). Functionally, specifically methylates the uridine in position 2552 of 23S rRNA at the 2'-O position of the ribose in the fully assembled 50S ribosomal subunit. This Vibrio atlanticus (strain LGP32) (Vibrio splendidus (strain Mel32)) protein is Ribosomal RNA large subunit methyltransferase E.